We begin with the raw amino-acid sequence, 498 residues long: ATP synthase subunit beta, chloroplastic (498 aa).

172-179 (GGAGVGKT) is an ATP binding site.

The protein belongs to the ATPase alpha/beta chains family. In terms of assembly, F-type ATPases have 2 components, CF(1) - the catalytic core - and CF(0) - the membrane proton channel. CF(1) has five subunits: alpha(3), beta(3), gamma(1), delta(1), epsilon(1). CF(0) has four main subunits: a(1), b(1), b'(1) and c(9-12).

The protein localises to the plastid. Its subcellular location is the chloroplast thylakoid membrane. It carries out the reaction ATP + H2O + 4 H(+)(in) = ADP + phosphate + 5 H(+)(out). Produces ATP from ADP in the presence of a proton gradient across the membrane. The catalytic sites are hosted primarily by the beta subunits. This chain is ATP synthase subunit beta, chloroplastic, found in Nicotiana sp. (Tobacco).